We begin with the raw amino-acid sequence, 554 residues long: Nonribosomal peptide synthetase ALT12 (554 aa).

The region spanning 1 to 76 (MASLEHMKRI…TLWEAMNDTQ (76 aa)) is the Carrier domain. At S35 the chain carries O-(pantetheine 4'-phosphoryl)serine. The segment at 124–434 (VQDNVLCVAP…QRIQNEITST (311 aa)) is condensation.

Belongs to the NRP synthetase family.

It participates in mycotoxin biosynthesis. Its function is as follows. Nonribosomal peptide synthetase; part of the gene cluster that mediates the biosynthesis of the host-selective toxins (HSTs) AAL-toxins, sphinganine-analog mycotoxins responsible for Alternaria stem canker on tomato by the tomato pathotype. The biosynthesis starts with the polyketide synthase ALT1-catalyzed C-16 carbon chain assembly from one starter acetyl-CoA unit with malonyl-CoA extender units. ALT1 also selectively transfers methyl groups at the first and the third cycle of chain elongation for AAL toxin. The C-16 polyketide chain is released from the enzyme by a nucleophilic attack of a carbanion, which is derived from R-carbon of glycin by decarboxylation, on the carbonyl carbon of polyketide acyl chain. This step is probably catalyzed by a pyridoxal 5'-phosphate-dependent aminoacyl transferase ALT4. The respective functions of the other enzymes encoded by the cluster have still to be elucidated. The sphingosine N-acyltransferase-like protein ALT7 seems not to act as a resistance/self-tolerance factor against the toxin in the toxin biosynthetic gene cluster, contrary to what is expected. The protein is Nonribosomal peptide synthetase ALT12 of Alternaria alternata (Alternaria rot fungus).